A 600-amino-acid polypeptide reads, in one-letter code: UvrABC system protein C (600 aa).

A GIY-YIG domain is found at 15 to 100 (NSAGVYQYFN…IKQLHPKYNI (86 aa)). Residues 203-238 (SVLLKNLEKQMLVLAQNENYEEAAKVRDQIAMIKDL) enclose the UVR domain.

The protein belongs to the UvrC family. As to quaternary structure, interacts with UvrB in an incision complex.

Its subcellular location is the cytoplasm. Functionally, the UvrABC repair system catalyzes the recognition and processing of DNA lesions. UvrC both incises the 5' and 3' sides of the lesion. The N-terminal half is responsible for the 3' incision and the C-terminal half is responsible for the 5' incision. In Campylobacter jejuni (strain RM1221), this protein is UvrABC system protein C.